The primary structure comprises 274 residues: uncharacterized protein (274 aa).

This is an uncharacterized protein from Treponema pallidum (strain Nichols).